A 60-amino-acid polypeptide reads, in one-letter code: MAKHPVPKKKTSKSKRDMRRSHHALTVPAMNDCPQCHGKKLSHHICPNCGYYDGRQVLAV.

The segment covering 1–23 (MAKHPVPKKKTSKSKRDMRRSHH) has biased composition (basic residues). The tract at residues 1–26 (MAKHPVPKKKTSKSKRDMRRSHHALT) is disordered.

Belongs to the bacterial ribosomal protein bL32 family.

This chain is Large ribosomal subunit protein bL32, found in Deinococcus deserti (strain DSM 17065 / CIP 109153 / LMG 22923 / VCD115).